Reading from the N-terminus, the 96-residue chain is Co-chaperonin GroES (96 aa).

Belongs to the GroES chaperonin family. As to quaternary structure, heptamer of 7 subunits arranged in a ring. Interacts with the chaperonin GroEL.

Its subcellular location is the cytoplasm. Together with the chaperonin GroEL, plays an essential role in assisting protein folding. The GroEL-GroES system forms a nano-cage that allows encapsulation of the non-native substrate proteins and provides a physical environment optimized to promote and accelerate protein folding. GroES binds to the apical surface of the GroEL ring, thereby capping the opening of the GroEL channel. This Geotalea uraniireducens (strain Rf4) (Geobacter uraniireducens) protein is Co-chaperonin GroES.